A 283-amino-acid chain; its full sequence is Elongation factor Ts (283 aa).

The interval 80 to 83 (TDFV) is involved in Mg(2+) ion dislocation from EF-Tu.

The protein belongs to the EF-Ts family.

The protein localises to the cytoplasm. Its function is as follows. Associates with the EF-Tu.GDP complex and induces the exchange of GDP to GTP. It remains bound to the aminoacyl-tRNA.EF-Tu.GTP complex up to the GTP hydrolysis stage on the ribosome. This is Elongation factor Ts from Salmonella choleraesuis (strain SC-B67).